The sequence spans 214 residues: Cytochrome c biogenesis ATP-binding export protein CcmA (214 aa).

Positions 8–212 (LYAADLACLK…PPTVLDLSEV (205 aa)) constitute an ABC transporter domain. 40–47 (GPNGFGKT) lines the ATP pocket.

It belongs to the ABC transporter superfamily. CcmA exporter (TC 3.A.1.107) family. As to quaternary structure, the complex is composed of two ATP-binding proteins (CcmA) and two transmembrane proteins (CcmB).

It localises to the cell inner membrane. The catalysed reaction is heme b(in) + ATP + H2O = heme b(out) + ADP + phosphate + H(+). Part of the ABC transporter complex CcmAB involved in the biogenesis of c-type cytochromes; once thought to export heme, this seems not to be the case, but its exact role is uncertain. Responsible for energy coupling to the transport system. In Aromatoleum aromaticum (strain DSM 19018 / LMG 30748 / EbN1) (Azoarcus sp. (strain EbN1)), this protein is Cytochrome c biogenesis ATP-binding export protein CcmA.